Reading from the N-terminus, the 58-residue chain is uncharacterized protein (58 aa).

The chain crosses the membrane as a helical span at residues 12-32 (VMTLLITISILIVLAVLLVTI).

The protein resides in the cell membrane. This is an uncharacterized protein from Bacillus subtilis (strain 168).